Consider the following 263-residue polypeptide: R-spondin-1 (263 aa).

Residues methionine 1–serine 20 form the signal peptide. 2 FU repeats span residues alanine 34 to aspartate 85 and methionine 91 to alanine 135. Disulfide bonds link cysteine 40–cysteine 47, cysteine 44–cysteine 53, cysteine 56–cysteine 75, cysteine 79–cysteine 94, cysteine 97–cysteine 105, cysteine 102–cysteine 111, cysteine 114–cysteine 125, cysteine 129–cysteine 142, cysteine 148–cysteine 190, cysteine 159–cysteine 166, and cysteine 199–cysteine 206. Asparagine 137 is a glycosylation site (N-linked (GlcNAc...) asparagine). Residues glutamine 147–proline 207 enclose the TSP type-1 domain. Residues tryptophan 153 and tryptophan 156 are each glycosylated (C-linked (Man) tryptophan). A disordered region spans residues cysteine 206 to alanine 263. A compositionally biased stretch (basic and acidic residues) spans glycine 218–glutamate 234.

It belongs to the R-spondin family. In terms of assembly, interacts with the extracellular domain of FZD8 and LRP6. It however does not form a ternary complex with FZD8 and LRP6. Interacts with WNT1. Binds heparin. Interacts with ZNRF3; promoting indirect interaction between ZNRF3 and LGR4 and membrane clearance of ZNRF3. Interacts with LGR4, LGR5 and LGR6. Identified in a complex composed of RNF43, LGR5 and RSPO1. Interacts (via FU repeats) with KREM1. In terms of processing, C-, and N-glycosylated. N-glycosylation at Asn-137, negatively influences its secretion and enhancing effect on Wnt/beta-catenin signaling. C-mannosylation at Trp-156 by DPY19L3 is required for its secretion and regulates the enhancing activity of Wnt signaling. In terms of tissue distribution, abundantly expressed in adrenal glands, ovary, testis, thyroid and trachea but not in bone marrow, spinal cord, stomach, leukocytes colon, small intestine, prostate, thymus and spleen.

The protein resides in the secreted. It is found in the nucleus. Functionally, activator of the canonical Wnt signaling pathway by acting as a ligand for LGR4-6 receptors. Upon binding to LGR4-6 (LGR4, LGR5 or LGR6), LGR4-6 associate with phosphorylated LRP6 and frizzled receptors that are activated by extracellular Wnt receptors, triggering the canonical Wnt signaling pathway to increase expression of target genes. Also regulates the canonical Wnt/beta-catenin-dependent pathway and non-canonical Wnt signaling by acting as an inhibitor of ZNRF3, an important regulator of the Wnt signaling pathway. Acts as a ligand for frizzled FZD8 and LRP6. May negatively regulate the TGF-beta pathway. Has a essential roles in ovary determination. Regulates Wnt signaling by antagonizing DKK1/KREM1-mediated internalization of LRP6 through an interaction with KREM1. The sequence is that of R-spondin-1 (RSPO1) from Homo sapiens (Human).